Reading from the N-terminus, the 137-residue chain is Transcription antitermination protein NusB (137 aa).

This sequence belongs to the NusB family.

Involved in transcription antitermination. Required for transcription of ribosomal RNA (rRNA) genes. Binds specifically to the boxA antiterminator sequence of the ribosomal RNA (rrn) operons. In Aeromonas hydrophila subsp. hydrophila (strain ATCC 7966 / DSM 30187 / BCRC 13018 / CCUG 14551 / JCM 1027 / KCTC 2358 / NCIMB 9240 / NCTC 8049), this protein is Transcription antitermination protein NusB.